A 293-amino-acid polypeptide reads, in one-letter code: N-acetylneuraminate lyase (293 aa).

Residues Ser47, Thr48, and Tyr136 each coordinate aceneuramate. Tyr136 acts as the Proton donor in catalysis. Lys164 serves as the catalytic Schiff-base intermediate with substrate. Aceneuramate is bound by residues Thr166, Gly188, Asp190, Glu191, Ser207, and Tyr251.

The protein belongs to the DapA family. NanA subfamily. In terms of assembly, homotetramer.

It localises to the cytoplasm. The catalysed reaction is aceneuramate = aldehydo-N-acetyl-D-mannosamine + pyruvate. The protein operates within amino-sugar metabolism; N-acetylneuraminate degradation; D-fructose 6-phosphate from N-acetylneuraminate: step 1/5. Functionally, catalyzes the reversible aldol cleavage of N-acetylneuraminic acid (sialic acid; Neu5Ac) to form pyruvate and N-acetylmannosamine (ManNAc) via a Schiff base intermediate. This is N-acetylneuraminate lyase from Pasteurella multocida (strain Pm70).